The following is a 128-amino-acid chain: Small ribosomal subunit protein eS6 (128 aa).

The protein belongs to the eukaryotic ribosomal protein eS6 family.

This is Small ribosomal subunit protein eS6 from Thermoplasma volcanium (strain ATCC 51530 / DSM 4299 / JCM 9571 / NBRC 15438 / GSS1).